Reading from the N-terminus, the 239-residue chain is Ribonuclease PH (239 aa).

Phosphate-binding positions include arginine 87 and 125–127; that span reads GTR.

This sequence belongs to the RNase PH family. As to quaternary structure, homohexameric ring arranged as a trimer of dimers.

It carries out the reaction tRNA(n+1) + phosphate = tRNA(n) + a ribonucleoside 5'-diphosphate. Functionally, phosphorolytic 3'-5' exoribonuclease that plays an important role in tRNA 3'-end maturation. Removes nucleotide residues following the 3'-CCA terminus of tRNAs; can also add nucleotides to the ends of RNA molecules by using nucleoside diphosphates as substrates, but this may not be physiologically important. Probably plays a role in initiation of 16S rRNA degradation (leading to ribosome degradation) during starvation. The chain is Ribonuclease PH from Ectopseudomonas mendocina (strain ymp) (Pseudomonas mendocina).